A 318-amino-acid polypeptide reads, in one-letter code: Ribosomal RNA small subunit methyltransferase H (318 aa).

Residues 38 to 40 (GGH), Asp58, Tyr86, Asp107, and Gln114 contribute to the S-adenosyl-L-methionine site.

The protein belongs to the methyltransferase superfamily. RsmH family.

Its subcellular location is the cytoplasm. The catalysed reaction is cytidine(1402) in 16S rRNA + S-adenosyl-L-methionine = N(4)-methylcytidine(1402) in 16S rRNA + S-adenosyl-L-homocysteine + H(+). Specifically methylates the N4 position of cytidine in position 1402 (C1402) of 16S rRNA. The polypeptide is Ribosomal RNA small subunit methyltransferase H (Methylibium petroleiphilum (strain ATCC BAA-1232 / LMG 22953 / PM1)).